The following is a 137-amino-acid chain: 5-hydroxyisourate hydrolase (137 aa).

Positions 1–23 are cleaved as a signal peptide; it reads MLKRYLVLSVVTAAFSLPSLVYA. The substrate site is built by His-32, Arg-70, and Tyr-134.

This sequence belongs to the transthyretin family. 5-hydroxyisourate hydrolase subfamily. As to quaternary structure, homotetramer.

Its subcellular location is the periplasm. The enzyme catalyses 5-hydroxyisourate + H2O = 5-hydroxy-2-oxo-4-ureido-2,5-dihydro-1H-imidazole-5-carboxylate + H(+). Its function is as follows. Catalyzes the hydrolysis of 5-hydroxyisourate (HIU) to 2-oxo-4-hydroxy-4-carboxy-5-ureidoimidazoline (OHCU). The chain is 5-hydroxyisourate hydrolase (hiuH) from Escherichia coli O157:H7.